Here is a 1859-residue protein sequence, read N- to C-terminus: DNA-directed RNA polymerase subunit beta'' (1859 aa).

Zn(2+) is bound by residues Cys286, Cys359, Cys366, and Cys369.

Belongs to the RNA polymerase beta' chain family. RpoC2 subfamily. In terms of assembly, in plastids the minimal PEP RNA polymerase catalytic core is composed of four subunits: alpha, beta, beta', and beta''. When a (nuclear-encoded) sigma factor is associated with the core the holoenzyme is formed, which can initiate transcription. It depends on Zn(2+) as a cofactor.

Its subcellular location is the plastid. The protein resides in the chloroplast. The catalysed reaction is RNA(n) + a ribonucleoside 5'-triphosphate = RNA(n+1) + diphosphate. Its function is as follows. DNA-dependent RNA polymerase catalyzes the transcription of DNA into RNA using the four ribonucleoside triphosphates as substrates. This is DNA-directed RNA polymerase subunit beta'' from Oltmannsiellopsis viridis (Marine flagellate).